The following is a 28-amino-acid chain: Ranatuerin-2SEc (28 aa).

Residues cysteine 23 and cysteine 28 are joined by a disulfide bond.

Expressed by the skin glands.

The protein resides in the secreted. In terms of biological role, mast cell degranulating peptide. Causes histamine release from rat peritoneal mast cells in vitro. Has antibacterial activity against the Gram-negative bacterium E.coli K12 and Gram-positive bacterium M.luteus NCT C2665. This Lithobates sevosus (Dusky gopher frog) protein is Ranatuerin-2SEc.